The following is a 121-amino-acid chain: MVVMRAKDLLGRSGEALAADFLENQGMRIVDRNWRCPDGEIDIVAIDGDTLVVAEVKTRKSLDYGHPFEAVDAAKLARLHRLSSSWCRQHQLNAPRRRIDVVSVIDNGVVEPQLEHLRGVC.

Belongs to the UPF0102 family.

The polypeptide is UPF0102 protein AAur_2443 (Paenarthrobacter aurescens (strain TC1)).